The following is a 367-amino-acid chain: Molybdopterin synthase catalytic subunit (367 aa).

Substrate-binding positions include 101-102, lysine 117, and 124-126; these read HR and KKE. The segment at 326 to 345 is disordered; the sequence is HFTKREPSSMEAAPPKKIRK.

Belongs to the MoaE family. MOCS2B subfamily. In terms of assembly, heterotetramer; composed of 2 small (Mocs2A) and 2 large (Mocs2B) subunits.

The protein localises to the cytoplasm. The enzyme catalyses 2 [molybdopterin-synthase sulfur-carrier protein]-C-terminal-Gly-aminoethanethioate + cyclic pyranopterin phosphate + H2O = molybdopterin + 2 [molybdopterin-synthase sulfur-carrier protein]-C-terminal Gly-Gly + 2 H(+). It participates in cofactor biosynthesis; molybdopterin biosynthesis. Catalytic subunit of the molybdopterin synthase complex, a complex that catalyzes the conversion of precursor Z into molybdopterin. Acts by mediating the incorporation of 2 sulfur atoms from thiocarboxylated Mocs2A into precursor Z to generate a dithiolene group. The protein is Molybdopterin synthase catalytic subunit of Drosophila sechellia (Fruit fly).